We begin with the raw amino-acid sequence, 227 residues long: NADH-quinone oxidoreductase subunit C (227 aa).

It belongs to the complex I 30 kDa subunit family. As to quaternary structure, NDH-1 is composed of 14 different subunits. Subunits NuoB, C, D, E, F, and G constitute the peripheral sector of the complex.

The protein resides in the cell inner membrane. The catalysed reaction is a quinone + NADH + 5 H(+)(in) = a quinol + NAD(+) + 4 H(+)(out). Functionally, NDH-1 shuttles electrons from NADH, via FMN and iron-sulfur (Fe-S) centers, to quinones in the respiratory chain. The immediate electron acceptor for the enzyme in this species is believed to be ubiquinone. Couples the redox reaction to proton translocation (for every two electrons transferred, four hydrogen ions are translocated across the cytoplasmic membrane), and thus conserves the redox energy in a proton gradient. This is NADH-quinone oxidoreductase subunit C from Legionella pneumophila (strain Corby).